Here is an 867-residue protein sequence, read N- to C-terminus: Nitrate reductase [NADPH] (867 aa).

The interval 38–58 (DIPLPPPSKEPTEVLSIDKPT) is disordered. C152 lines the Mo-molybdopterin pocket. Residues 514-589 (NRIIDLQEFK…MPDYHIGTMD (76 aa)) enclose the Cytochrome b5 heme-binding domain. The heme site is built by H549 and H572. In terms of domain architecture, FAD-binding FR-type spans 615-726 (KSWTKATLVK…KGPTGRFEYL (112 aa)). FAD-binding positions include 669–672 (RSYT), 686–690 (LVKIY), F691, 700–702 (KMT), and T753. Residue 837-846 (MVLICGPEAM) coordinates NADP(+).

This sequence belongs to the nitrate reductase family. Homodimer. It depends on FAD as a cofactor. Requires heme as cofactor. Mo-molybdopterin is required as a cofactor.

The enzyme catalyses nitrite + NADP(+) + H2O = nitrate + NADPH + H(+). Functionally, nitrate reductase is a key enzyme involved in the first step of nitrate assimilation in plants, fungi and bacteria. The protein is Nitrate reductase [NADPH] (niaD) of Aspergillus niger.